We begin with the raw amino-acid sequence, 398 residues long: Elongation factor Tu (398 aa).

One can recognise a tr-type G domain in the interval 10 to 208 (KPHVNVGTIG…ALDDYIPEPE (199 aa)). The interval 19-26 (GHVDHGKT) is G1. Residue 19-26 (GHVDHGKT) participates in GTP binding. A Mg(2+)-binding site is contributed by Thr-26. Residues 61–65 (GITIA) form a G2 region. Positions 82 to 85 (DCPG) are G3. GTP-binding positions include 82–86 (DCPGH) and 137–140 (NKAD). A G4 region spans residues 137 to 140 (NKAD). Residues 175–177 (SAL) form a G5 region.

The protein belongs to the TRAFAC class translation factor GTPase superfamily. Classic translation factor GTPase family. EF-Tu/EF-1A subfamily. In terms of assembly, monomer.

The protein localises to the cytoplasm. It carries out the reaction GTP + H2O = GDP + phosphate + H(+). In terms of biological role, GTP hydrolase that promotes the GTP-dependent binding of aminoacyl-tRNA to the A-site of ribosomes during protein biosynthesis. The protein is Elongation factor Tu of Marinobacter nauticus (strain ATCC 700491 / DSM 11845 / VT8) (Marinobacter aquaeolei).